The primary structure comprises 256 residues: Large ribosomal subunit protein uL2 (256 aa).

Residues 208 to 230 (EHPHGGGNHQHIGKASTVKRGTS) form a disordered region.

This sequence belongs to the universal ribosomal protein uL2 family. In larvae tissues examined: gut, brain imaginal disk, salivary glands, fat body, muscles, epidermis and trachaea.

The protein localises to the cytoplasm. The chain is Large ribosomal subunit protein uL2 (RpL8) from Drosophila melanogaster (Fruit fly).